The sequence spans 1225 residues: Hybrid signal transduction histidine kinase C (1225 aa).

Residues 8-28 traverse the membrane as a helical segment; the sequence is GFLLSTLFFTIISIILFYFFI. Residues 313–356 show a composition bias toward low complexity; sequence LSPRSLSSSSSSSPSSSNNNGNTNNSGSLSPRSSNSNGSAVSPR. The interval 313 to 407 is disordered; it reads LSPRSLSSSS…SNGTISSPRT (95 aa). The span at 357–368 shows a compositional bias: polar residues; the sequence is NVSSNSMSPRGQ. Residues 370–388 show a composition bias toward low complexity; the sequence is SDRSISSPRGSSSSSSSSS. Polar residues predominate over residues 389 to 407; the sequence is NELAISPRNSNGTISSPRT. The region spanning 426–653 is the Histidine kinase domain; that stretch reads HLSHELRTPI…TFHFVIPLET (228 aa). Histidine 429 bears the Phosphohistidine; by autocatalysis mark. One can recognise a Response regulatory 1 domain in the interval 669–784; the sequence is SVLVVDKNPY…HLVACLLASM (116 aa). The residue at position 721 (aspartate 721) is a 4-aspartylphosphate. 3 disordered regions span residues 809–832, 941–974, and 1021–1076; these read NNINNNSNNNNNNMQTHNSNSVYG, DDDSNNYCNTTGTMDSIDEINKNNYSDSESDELN, and YLSP…PRAP. Positions 945–954 are enriched in polar residues; that stretch reads NNYCNTTGTM. A compositionally biased stretch (low complexity) spans 1023–1037; the sequence is SPRSMNNNNGNNDNG. Residues 1058-1072 are compositionally biased toward polar residues; the sequence is TSDTSSLAQSPNSLS. In terms of domain architecture, Response regulatory 2 spans 1078–1200; that stretch reads KIMILDDNPV…CLELILRKWE (123 aa). Aspartate 1127 carries the 4-aspartylphosphate modification.

It is found in the membrane. The enzyme catalyses ATP + protein L-histidine = ADP + protein N-phospho-L-histidine.. In terms of biological role, acts in a signal transduction pathway that regulates the slug versus culmination choice. Believed to be the first component of a phosphorelay that couples the sensing of ammonia to the modulation of PKA activity and hence activates culmination and spore germination. Ammonium transporters amtA and amtC are thought to respectively activate and inhibit dhkC phosphorelay. This protein probably undergoes an ATP-dependent autophosphorylation at conserved His residue in the kinase core, and a phosphoryl group is then transferred to a conserved aspartate residue in the receiver domain. The sequence is that of Hybrid signal transduction histidine kinase C (dhkC) from Dictyostelium discoideum (Social amoeba).